The sequence spans 124 residues: Small ribosomal subunit protein uS13 (124 aa).

The disordered stretch occupies residues 94-124 (RGLPVRGQRTKTNARTRKGPKRTIAGKKKAR).

It belongs to the universal ribosomal protein uS13 family. As to quaternary structure, part of the 30S ribosomal subunit. Forms a loose heterodimer with protein S19. Forms two bridges to the 50S subunit in the 70S ribosome.

Functionally, located at the top of the head of the 30S subunit, it contacts several helices of the 16S rRNA. In the 70S ribosome it contacts the 23S rRNA (bridge B1a) and protein L5 of the 50S subunit (bridge B1b), connecting the 2 subunits; these bridges are implicated in subunit movement. Contacts the tRNAs in the A and P-sites. This chain is Small ribosomal subunit protein uS13, found in Mycolicibacterium vanbaalenii (strain DSM 7251 / JCM 13017 / BCRC 16820 / KCTC 9966 / NRRL B-24157 / PYR-1) (Mycobacterium vanbaalenii).